Reading from the N-terminus, the 97-residue chain is Co-chaperonin GroES (97 aa).

It belongs to the GroES chaperonin family. In terms of assembly, heptamer of 7 subunits arranged in a ring. Interacts with the chaperonin GroEL.

It is found in the cytoplasm. Functionally, together with the chaperonin GroEL, plays an essential role in assisting protein folding. The GroEL-GroES system forms a nano-cage that allows encapsulation of the non-native substrate proteins and provides a physical environment optimized to promote and accelerate protein folding. GroES binds to the apical surface of the GroEL ring, thereby capping the opening of the GroEL channel. This is Co-chaperonin GroES from Blochmanniella pennsylvanica (strain BPEN).